The chain runs to 1354 residues: Rho-associated protein kinase 1 (1354 aa).

Ser-2 is modified (N-acetylserine). The Protein kinase domain maps to 76-338 (YEVVKVIGRG…VEEIKRHLFF (263 aa)). Residues 82–90 (IGRGAFGEV) and Lys-105 contribute to the ATP site. Asp-198 functions as the Proton acceptor in the catalytic mechanism. Positions 341 to 409 (DQWAWETLRD…YSNRRYLPSA (69 aa)) constitute an AGC-kinase C-terminal domain. The interaction with FHOD1 stretch occupies residues 368 to 727 (FDDLEEDKGD…KKLKEEREAR (360 aa)). Positions 422 to 692 (KSLQESLQKT…RLEQEVNEHK (271 aa)) form a coiled coil. The 78-residue stretch at 479-556 (SAVSQIEKEK…LEEANDLLRT (78 aa)) folds into the REM-1 domain. The interval 707-946 (EAKSVAMCEM…TVSRLEETNS (240 aa)) is SHROOM3 binding. Positions 949-1015 (TKDIEMLRKE…LAEIMNRKDF (67 aa)) constitute a RhoBD domain. Residues 998–1010 (LKTQAVNKLAEIM) are RHOA binding. Residues 1011–1102 (NRKDFKIDRK…KLLDLSDSTS (92 aa)) adopt a coiled-coil conformation. A phosphoserine mark is found at Ser-1105 and Ser-1108. The auto-inhibitory stretch occupies residues 1115 to 1354 (NLPESRIEGW…VVKNTSGKTS (240 aa)). The 200-residue stretch at 1118–1317 (ESRIEGWLSV…WVTHLVKKIP (200 aa)) folds into the PH domain. The Phorbol-ester/DAG-type zinc finger occupies 1228–1283 (GHEFIPTLYHFPANCEACAKPLWHVFKPPPALECRRCHVKCHRDHLDKKEDLISPC). Ser-1328 carries the post-translational modification Phosphoserine. The segment at 1333-1354 (STRSTANQSFRKVVKNTSGKTS) is disordered.

It belongs to the protein kinase superfamily. AGC Ser/Thr protein kinase family. In terms of assembly, homodimer. Interacts with RHOA (activated by GTP), RHOB, RHOC, GEM, MYLC2B, RHOE, PPP1R12A, LIMK1, LIMK2, TSG101, CHORDC1, DAPK3, PFN1 and JIP3. Interacts with FHOD1 in a Src-dependent manner. Interacts with PTEN. Interacts with ITGB1BP1 (via N-terminus and PTB domain). Interacts with SHROOM3. The cofactor is Mg(2+). Autophosphorylated on serine and threonine residues. In terms of processing, cleaved by caspase-3 during apoptosis. This leads to constitutive activation of the kinase and membrane blebbing. Highly expressed in brain, heart, lung, liver, stomach, spleen, kidney, testis, muscle, embryo and placenta.

Its subcellular location is the cytoplasm. The protein localises to the cytoskeleton. It localises to the microtubule organizing center. It is found in the centrosome. The protein resides in the centriole. Its subcellular location is the golgi apparatus membrane. The protein localises to the cell projection. It localises to the bleb. It is found in the cell membrane. The protein resides in the lamellipodium. Its subcellular location is the ruffle. It catalyses the reaction L-seryl-[protein] + ATP = O-phospho-L-seryl-[protein] + ADP + H(+). It carries out the reaction L-threonyl-[protein] + ATP = O-phospho-L-threonyl-[protein] + ADP + H(+). Its activity is regulated as follows. Activated by RHOA binding. Inhibited by Y-27632. Functionally, protein kinase which is a key regulator of the actin cytoskeleton and cell polarity. Involved in regulation of smooth muscle contraction, actin cytoskeleton organization, stress fiber and focal adhesion formation, neurite retraction, cell adhesion and motility via phosphorylation of DAPK3, GFAP, LIMK1, LIMK2, MYL9/MLC2, TPPP, PFN1 and PPP1R12A. Phosphorylates FHOD1 and acts synergistically with it to promote SRC-dependent non-apoptotic plasma membrane blebbing. Phosphorylates JIP3 and regulates the recruitment of JNK to JIP3 upon UVB-induced stress. Acts as a suppressor of inflammatory cell migration by regulating PTEN phosphorylation and stability. Acts as a negative regulator of VEGF-induced angiogenic endothelial cell activation. Required for centrosome positioning and centrosome-dependent exit from mitosis. Plays a role in terminal erythroid differentiation. Inhibits podocyte motility via regulation of actin cytoskeletal dynamics and phosphorylation of CFL1. Promotes keratinocyte terminal differentiation. Involved in osteoblast compaction through the fibronectin fibrillogenesis cell-mediated matrix assembly process, essential for osteoblast mineralization. May regulate closure of the eyelids and ventral body wall by inducing the assembly of actomyosin bundles. The protein is Rho-associated protein kinase 1 (Rock1) of Mus musculus (Mouse).